The chain runs to 424 residues: Enolase (424 aa).

Glutamine 162 lines the (2R)-2-phosphoglycerate pocket. Glutamate 204 functions as the Proton donor in the catalytic mechanism. Aspartate 241, glutamate 284, and aspartate 311 together coordinate Mg(2+). The (2R)-2-phosphoglycerate site is built by lysine 336, arginine 365, serine 366, and lysine 387. The Proton acceptor role is filled by lysine 336.

The protein belongs to the enolase family. Mg(2+) serves as cofactor.

It is found in the cytoplasm. The protein localises to the secreted. The protein resides in the cell surface. The enzyme catalyses (2R)-2-phosphoglycerate = phosphoenolpyruvate + H2O. The protein operates within carbohydrate degradation; glycolysis; pyruvate from D-glyceraldehyde 3-phosphate: step 4/5. Catalyzes the reversible conversion of 2-phosphoglycerate (2-PG) into phosphoenolpyruvate (PEP). It is essential for the degradation of carbohydrates via glycolysis. The sequence is that of Enolase from Rhizobium etli (strain ATCC 51251 / DSM 11541 / JCM 21823 / NBRC 15573 / CFN 42).